Reading from the N-terminus, the 910-residue chain is Protein translocase subunit SecA (910 aa).

ATP-binding positions include Gln89, 107–111 (GEGKT), and Asp496. Positions 873-910 (QEFSGGNLNRSQSNGSSVTVTTSSGGGTERKTSRRRKR) are disordered. A compositionally biased stretch (polar residues) spans 876–886 (SGGNLNRSQSN).

This sequence belongs to the SecA family. Monomer and homodimer. Part of the essential Sec protein translocation apparatus which comprises SecA, SecYEG and auxiliary proteins SecDF. Other proteins may also be involved.

It localises to the cell inner membrane. The protein localises to the cytoplasm. It catalyses the reaction ATP + H2O + cellular proteinSide 1 = ADP + phosphate + cellular proteinSide 2.. In terms of biological role, part of the Sec protein translocase complex. Interacts with the SecYEG preprotein conducting channel. Has a central role in coupling the hydrolysis of ATP to the transfer of proteins into and across the cell membrane, serving as an ATP-driven molecular motor driving the stepwise translocation of polypeptide chains across the membrane. This is Protein translocase subunit SecA from Leptospira interrogans serogroup Icterohaemorrhagiae serovar copenhageni (strain Fiocruz L1-130).